The following is a 414-amino-acid chain: Imidazolonepropionase (414 aa).

Fe(3+) is bound by residues histidine 95 and histidine 97. Positions 95 and 97 each coordinate Zn(2+). 4-imidazolone-5-propanoate-binding residues include arginine 104, tyrosine 162, and histidine 189. N-formimidoyl-L-glutamate is bound at residue tyrosine 162. Histidine 252 serves as a coordination point for Fe(3+). Histidine 252 is a Zn(2+) binding site. 4-imidazolone-5-propanoate is bound at residue glutamine 255. Residue aspartate 326 participates in Fe(3+) binding. Residue aspartate 326 participates in Zn(2+) binding. N-formimidoyl-L-glutamate is bound by residues asparagine 328 and glycine 330. 4-imidazolone-5-propanoate is bound at residue serine 331.

It belongs to the metallo-dependent hydrolases superfamily. HutI family. It depends on Zn(2+) as a cofactor. Requires Fe(3+) as cofactor.

The protein resides in the cytoplasm. The enzyme catalyses 4-imidazolone-5-propanoate + H2O = N-formimidoyl-L-glutamate. The protein operates within amino-acid degradation; L-histidine degradation into L-glutamate; N-formimidoyl-L-glutamate from L-histidine: step 3/3. Functionally, catalyzes the hydrolytic cleavage of the carbon-nitrogen bond in imidazolone-5-propanoate to yield N-formimidoyl-L-glutamate. It is the third step in the universal histidine degradation pathway. This Streptomyces avermitilis (strain ATCC 31267 / DSM 46492 / JCM 5070 / NBRC 14893 / NCIMB 12804 / NRRL 8165 / MA-4680) protein is Imidazolonepropionase.